We begin with the raw amino-acid sequence, 88 residues long: MATKKSGGSSGNGRDSRGRRLGVKKFGSEKVIPGNIIIRQRGTKYHPGKNVGIGKDHTIFSKISGFVHFRKGVYNKTFVDVLEASSVS.

Residues 1–24 (MATKKSGGSSGNGRDSRGRRLGVK) form a disordered region.

Belongs to the bacterial ribosomal protein bL27 family.

This is Large ribosomal subunit protein bL27 from Ehrlichia chaffeensis (strain ATCC CRL-10679 / Arkansas).